The sequence spans 317 residues: Cytochrome c biogenesis protein CcsA (317 aa).

Helical transmembrane passes span 13–35 (ISFS…HEIV), 44–64 (GMIA…IYSG), 71–91 (LYES…VPYF), 143–163 (MLLS…LLVI), 171–191 (MIGF…IKYL), 225–245 (VIGL…VWAN), and 286–306 (AIVA…VNLL).

Belongs to the CcmF/CycK/Ccl1/NrfE/CcsA family. May interact with Ccs1.

Its subcellular location is the plastid. The protein localises to the chloroplast thylakoid membrane. Required during biogenesis of c-type cytochromes (cytochrome c6 and cytochrome f) at the step of heme attachment. This is Cytochrome c biogenesis protein CcsA from Illicium oligandrum (Star anise).